The following is a 921-amino-acid chain: Isoleucine--tRNA ligase (921 aa).

The 'HIGH' region signature appears at 57 to 67 (PYANGDIHMGH). Glu-552 is an L-isoleucyl-5'-AMP binding site. The short motif at 593–597 (KMSKS) is the 'KMSKS' region element. Lys-596 provides a ligand contact to ATP. Zn(2+) contacts are provided by Cys-888, Cys-891, Cys-908, and Cys-911.

The protein belongs to the class-I aminoacyl-tRNA synthetase family. IleS type 1 subfamily. Monomer. Requires Zn(2+) as cofactor.

It is found in the cytoplasm. It catalyses the reaction tRNA(Ile) + L-isoleucine + ATP = L-isoleucyl-tRNA(Ile) + AMP + diphosphate. Catalyzes the attachment of isoleucine to tRNA(Ile). As IleRS can inadvertently accommodate and process structurally similar amino acids such as valine, to avoid such errors it has two additional distinct tRNA(Ile)-dependent editing activities. One activity is designated as 'pretransfer' editing and involves the hydrolysis of activated Val-AMP. The other activity is designated 'posttransfer' editing and involves deacylation of mischarged Val-tRNA(Ile). The sequence is that of Isoleucine--tRNA ligase from Bacillus cytotoxicus (strain DSM 22905 / CIP 110041 / 391-98 / NVH 391-98).